The following is a 129-amino-acid chain: Glycine cleavage system H protein (129 aa).

Positions 24 to 106 constitute a Lipoyl-binding domain; sequence IATIGISAFA…YGEGWLVKVR (83 aa). Residue Lys65 is modified to N6-lipoyllysine.

Belongs to the GcvH family. As to quaternary structure, the glycine cleavage system is composed of four proteins: P, T, L and H. (R)-lipoate serves as cofactor.

Its function is as follows. The glycine cleavage system catalyzes the degradation of glycine. The H protein shuttles the methylamine group of glycine from the P protein to the T protein. This chain is Glycine cleavage system H protein, found in Cyanothece sp. (strain PCC 7425 / ATCC 29141).